A 416-amino-acid polypeptide reads, in one-letter code: Na(+)/H(+) antiporter NhaA (416 aa).

A run of 9 helical transmembrane segments spans residues 18 to 38, 59 to 79, 97 to 117, 127 to 147, 167 to 187, 265 to 285, 297 to 317, 333 to 353, and 363 to 383; these read VGGA…NSPW, LTLA…VAGL, ALPI…AAVI, GWAI…ALTG, LLAI…LWLL, GICV…ATVF, VMLG…WVAI, MFAL…VAEL, and LAKA…SALL. Residues 396 to 416 form a disordered region; the sequence is ALELQPDEGDASDPSEGGSLR.

This sequence belongs to the NhaA Na(+)/H(+) (TC 2.A.33) antiporter family.

It is found in the cell membrane. It catalyses the reaction Na(+)(in) + 2 H(+)(out) = Na(+)(out) + 2 H(+)(in). Na(+)/H(+) antiporter that extrudes sodium in exchange for external protons. This chain is Na(+)/H(+) antiporter NhaA, found in Nocardia farcinica (strain IFM 10152).